The following is a 491-amino-acid chain: Probable cytosol aminopeptidase (491 aa).

Mn(2+)-binding residues include Lys261 and Asp266. Residue Lys273 is part of the active site. Asp285, Asp344, and Glu346 together coordinate Mn(2+). Arg348 is an active-site residue.

This sequence belongs to the peptidase M17 family. It depends on Mn(2+) as a cofactor.

It is found in the cytoplasm. The catalysed reaction is Release of an N-terminal amino acid, Xaa-|-Yaa-, in which Xaa is preferably Leu, but may be other amino acids including Pro although not Arg or Lys, and Yaa may be Pro. Amino acid amides and methyl esters are also readily hydrolyzed, but rates on arylamides are exceedingly low.. It catalyses the reaction Release of an N-terminal amino acid, preferentially leucine, but not glutamic or aspartic acids.. Functionally, presumably involved in the processing and regular turnover of intracellular proteins. Catalyzes the removal of unsubstituted N-terminal amino acids from various peptides. In Picosynechococcus sp. (strain ATCC 27264 / PCC 7002 / PR-6) (Agmenellum quadruplicatum), this protein is Probable cytosol aminopeptidase.